Consider the following 219-residue polypeptide: MPILAKRVLFIDAEAMIIDKPAGLPVTSVRDGSLSLENYLASLCFGFKRWPSIVHRLDRDTSGCLLLARNPKMHRRLSEAFSQGQVKKCYWAILEGVPEKNEGIIDLPLLKISSPKSGWRIVADDKGKRAVTHWEILAKNKGRSLVAFRPETGRTHQLRVHAATGLGLPIVGDPFYGSHKDENISRMMLHAHSLEIARLEKKPITAEAPLPKAFTDLGF.

Residue Asp-58 is part of the active site.

Belongs to the pseudouridine synthase RluA family.

It carries out the reaction a uridine in RNA = a pseudouridine in RNA. This is an uncharacterized protein from Zymomonas mobilis subsp. mobilis (strain ATCC 31821 / ZM4 / CP4).